The primary structure comprises 544 residues: Putative pentatricopeptide repeat-containing protein At5g59200, chloroplastic (544 aa).

The disordered stretch occupies residues 1–21 (MISSLAAITGGPSTFRRDPDS). The N-terminal 25 residues, 1 to 25 (MISSLAAITGGPSTFRRDPDSNTLR), are a transit peptide targeting the chloroplast. PPR repeat units follow at residues 60 to 90 (DAFV…VSNP), 91 to 125 (NVYL…SVLP), 127 to 156 (NYVI…GFGS), 157 to 187 (SRSV…MPDR), 188 to 218 (DHVA…VKIK), 219 to 253 (DTVC…NVSA), 254 to 288 (NEFT…RMEL), 289 to 319 (SNFV…MRDK), 320 to 354 (DVIS…GFRP), 355 to 385 (NQVT…MKRV), and 391 to 421 (QIEH…IPIE). Residues 426-501 (MLGTLLSACK…EPGCSTIEVD (76 aa)) are type E motif. Positions 502 to 532 (NQIHEFLVGDIAHPHKEAIYQRLQELNRILR) are type E(+) motif.

The protein belongs to the PPR family. PCMP-E subfamily.

The protein localises to the plastid. It is found in the chloroplast. Involved in RNA editing event in chloroplasts. Required for the editing of a single site in rpl23 transcript. This is Putative pentatricopeptide repeat-containing protein At5g59200, chloroplastic (PCMP-E41) from Arabidopsis thaliana (Mouse-ear cress).